The primary structure comprises 996 residues: NACHT, LRR and PYD domains-containing protein 9 (996 aa).

A Pyrin domain is found at 1–94; the sequence is MAESFFSDFG…WRKARNEIRQ (94 aa). The NACHT domain occupies 150 to 469; sequence PTVVLHGPEG…FYMFTRPKDP (320 aa). An ATP-binding site is contributed by 156–163; it reads GPEGIGKT. 6 LRR repeats span residues 748–769, 777–798, 805–825, 834–855, 862–883, and 891–914; these read KLNLLSLCENALKDDGVLVLCE, ALEALLLSHCCFSSAACDHLSQ, SLTFLDLGSNVLKDEGVTTLC, NLQELWLMNCYFTSVCCVDIAT, KLKTLKLGNNKIYDAGAKQLCK, and KLENLGLEACELSPASCEDLASAL.

This sequence belongs to the NLRP family. In terms of assembly, sensor component of NLRP9 inflammasomes. Inflammasomes are supramolecular complexes that assemble in the cytosol in response to pathogens, such as rotavirus, and play critical roles in innate immunity and inflammation. The core of NLRP9 inflammasomes consists of a signal sensor component (NLRP9), an adapter (ASC/PYCARD), which recruits an effector pro-inflammatory caspase (CASP1). Within the complex, NLRP9 and PYCARD interact via their respective DAPIN/pyrin domains. This interaction initiates speck formation (nucleation) which greatly enhances further addition of soluble PYCARD molecules to the speck in a prion-like polymerization process. Clustered PYCARD nucleates the formation of CASP1 filaments through the interaction of their respective CARD domains, acting as a platform for CASP1 polymerization. CASP1 filament formation increases local enzyme concentration, resulting in trans-autocleavage and activation. Active CASP1 then processes IL1B and IL18 precursors, leading to the release of mature cytokines in the extracellular milieu and inflammatory response. Interacts with DHX9 upon rotavirus infection; this interaction may trigger inflammasome activation and inflammatory response. As to expression, detected exclusively in testis and ovary, and at high level in the oocyte from antral follicles.

The protein localises to the cytoplasm. Its subcellular location is the inflammasome. Functionally, as the sensor component of the NLRP9 inflammasome, plays a crucial role in innate immunity and inflammation. In response to pathogens, including rotavirus, initiates the formation of the inflammasome polymeric complex, made of NLRP9, PYCARD and CASP1. Recruitment of proCASP1 to the inflammasome promotes its activation and CASP1-catalyzed IL1B and IL18 maturation and release in the extracellular milieu. The active cytokines stimulate inflammatory responses. Inflammasomes can also induce pyroptosis, an inflammatory form of programmed cell death. NLRP9 inflammasome activation may be initiated by DHX9 interaction with viral double-stranded RNA (dsRNA), preferentially to short dsRNA segments. This is NACHT, LRR and PYD domains-containing protein 9 (NLRP9) from Bos taurus (Bovine).